Reading from the N-terminus, the 124-residue chain is Small ribosomal subunit protein uS12 (124 aa).

The tract at residues 8-30 is disordered; that stretch reads IRSARQDTEKQTKSPALKSCPQR. D89 is modified (3-methylthioaspartic acid). Residues 103-124 are disordered; that stretch reads DTAGVKDRKQSRSKYGAKKPKA. A compositionally biased stretch (basic residues) spans 113-124; the sequence is SRSKYGAKKPKA.

It belongs to the universal ribosomal protein uS12 family. In terms of assembly, part of the 30S ribosomal subunit. Contacts proteins S8 and S17. May interact with IF1 in the 30S initiation complex.

Functionally, with S4 and S5 plays an important role in translational accuracy. Its function is as follows. Interacts with and stabilizes bases of the 16S rRNA that are involved in tRNA selection in the A site and with the mRNA backbone. Located at the interface of the 30S and 50S subunits, it traverses the body of the 30S subunit contacting proteins on the other side and probably holding the rRNA structure together. The combined cluster of proteins S8, S12 and S17 appears to hold together the shoulder and platform of the 30S subunit. This is Small ribosomal subunit protein uS12 from Trichodesmium erythraeum (strain IMS101).